Consider the following 1142-residue polypeptide: Zinc finger MYM-type protein 1 (1142 aa).

K25 participates in a covalent cross-link: Glycyl lysine isopeptide (Lys-Gly) (interchain with G-Cter in SUMO2). MYM-type zinc fingers lie at residues 110–148, 160–203, and 210–245; these read QLFC…PKDV, KTFC…QYEV, and HNLC…SSSL. K284 participates in a covalent cross-link: Glycyl lysine isopeptide (Lys-Gly) (interchain with G-Cter in SUMO2). The segment at 300–331 adopts an MYM-type 4 zinc-finger fold; the sequence is ELFCSINCFSAYSKAKMESSSVSVVSVVHDTS. Over residues 385-396 the composition is skewed to polar residues; the sequence is KSSPSEPSNAVA. Residues 385 to 413 form a disordered region; the sequence is KSSPSEPSNAVASSSTEQPSVSPSSSVFS. Low complexity predominate over residues 397–413; that stretch reads SSSTEQPSVSPSSSVFS. The segment at 452 to 538 adopts a TTF-type zinc-finger fold; the sequence is KSRSIKKSCC…YQFCDGAVSD (87 aa).

It is found in the nucleus. This Homo sapiens (Human) protein is Zinc finger MYM-type protein 1 (ZMYM1).